We begin with the raw amino-acid sequence, 132 residues long: Small ribosomal subunit protein uS8 (132 aa).

This sequence belongs to the universal ribosomal protein uS8 family. In terms of assembly, part of the 30S ribosomal subunit. Contacts proteins S5 and S12.

Functionally, one of the primary rRNA binding proteins, it binds directly to 16S rRNA central domain where it helps coordinate assembly of the platform of the 30S subunit. This chain is Small ribosomal subunit protein uS8, found in Streptococcus gordonii (strain Challis / ATCC 35105 / BCRC 15272 / CH1 / DL1 / V288).